The chain runs to 430 residues: Transcription factor PIF4 (430 aa).

Disordered regions lie at residues 42–71 (QTHR…DQET), 97–136 (MDPL…VMPP), 160–183 (TVGP…SHDR), 223–266 (DRKR…NLSE), and 405–430 (SSPA…RLDH). Basic and acidic residues predominate over residues 43 to 60 (THREQTQTQKQDHHEEAL). Residues 61–71 (RSSTFLEDQET) show a composition bias toward polar residues. A compositionally biased stretch (pro residues) spans 126–136 (CPDPPPQVMPP). Over residues 160–175 (TVGPSHCGSNPSQNDL) the composition is skewed to polar residues. The span at 244-253 (NKSNQRSGSN) shows a compositional bias: low complexity. The span at 257–266 (RAAEVHNLSE) shows a compositional bias: basic and acidic residues. The bHLH domain maps to 257-306 (RAAEVHNLSERRRRDRINERMKALQELIPHCSKTDKASILDEAIDYLKSL). Residues 405 to 419 (SSPAGQQSQQPSSVP) show a composition bias toward low complexity.

This sequence belongs to the bHLH protein family. As to quaternary structure, interacts preferentially with the Pfr form of phytochrome B (phyB). Binds DNA as a homodimer, but once bound to DNA, loses its capacity to interact with phyB. Interacts with APRR1/TOC1 and PIF3. Binds to RGL2 and RGA. Forms non-functional heterodimer with HFR1. Interacts with PHYB, CRY1 and CRY2 in the nucleus in response to low blue light (LBL). Interacts with FYPP1 and FYPP3. Associates to PTAC12/HMR/PAP5, which acts as a transcriptional coactivator to trigger the thermoresponsive growth-relevant genes and promote warm-temperature-dependent PIF4 accumulation. Interacts with MED14. In terms of tissue distribution, mainly expressed in leaves, stems and seedlings, and, to a lower extent, in fruits, flowers and roots.

The protein localises to the nucleus. Functionally, transcription factor acting negatively in the phytochrome B signaling pathway. May regulate the expression of a subset of genes involved in cell expansion by binding to the G-box motif. Activated by CRY1 and CRY2 in response to low blue light (LBL) by direct binding at chromatin on E-box variant 5'-CA[CT]GTG-3' to stimulate specific gene expression to adapt global physiology (e.g. hypocotyl elongation in low blue light). Element of a PIF4/HMR/MED14-dependent thermoresponsive process; collaboratively with its transcriptional coactivator PTAC12/HMR/PAP5, involved in the regulation of thermoresponsive growth-relevant genes (e.g. mainly involved in biosynthesis and signaling of the phytohormone auxin) leading to daytime warm temperature elicitation of MED14-dependent thermomorphogenesis (e.g. hypocotyl elongation). This is Transcription factor PIF4 from Arabidopsis thaliana (Mouse-ear cress).